A 110-amino-acid chain; its full sequence is Dermcidin (110 aa).

Positions Met-1–Ala-19 are cleaved as a signal peptide. Residues Ala-24–Leu-70 form a disordered region. O-linked (Xyl...) (chondroitin sulfate) serine glycans are attached at residues Ser-30 and Ser-38. The propeptide occupies Gly-50 to Arg-62. The helical transmembrane segment at Ser-64 to Ser-108 threads the bilayer. Residue Glu-67 participates in Zn(2+) binding. Lys-68 is subject to N6-acetyllysine. Residues Asp-71, Asp-86, Asp-90, His-100, and Asp-104 each coordinate Zn(2+). Leu-110 is a propeptide.

In terms of assembly, homohexamer. Requires Mn(2+) as cofactor. It depends on Zn(2+) as a cofactor. In terms of tissue distribution, detected in urine (at protein level). Constitutively expressed in eccrine sweat gland cells (at protein level). Secreted into the sweat at a concentration of 1-10 micrograms/ml.

Its subcellular location is the secreted. It localises to the membrane. Functionally, found in sweat, has an antimicrobial activity during early bacterial colonization. The secreted peptide assembles into homohexameric complexes that can associate with and also insert into pathogen membranes. Once inserted in bacteria membranes forms anion channels probably altering the transmembrane potential essential for bacterial survival. Highly effective against E.coli, E.faecalis, S.aureus and C.albicans. Optimal pH and salt concentration resemble the conditions in sweat. Also exhibits proteolytic activity, cleaving on the C-terminal side of Arg and, to a lesser extent, Lys residues. Its function is as follows. Promotes survival of neurons and displays phosphatase activity. It may bind IgG. This Homo sapiens (Human) protein is Dermcidin.